A 152-amino-acid polypeptide reads, in one-letter code: Holo-[acyl-carrier-protein] synthase (152 aa).

Residues Asp7 and Glu60 each coordinate Mg(2+).

It belongs to the P-Pant transferase superfamily. AcpS family. Mg(2+) serves as cofactor.

Its subcellular location is the cytoplasm. It catalyses the reaction apo-[ACP] + CoA = holo-[ACP] + adenosine 3',5'-bisphosphate + H(+). Functionally, transfers the 4'-phosphopantetheine moiety from coenzyme A to a Ser of acyl-carrier-protein. This is Holo-[acyl-carrier-protein] synthase from Bifidobacterium adolescentis (strain ATCC 15703 / DSM 20083 / NCTC 11814 / E194a).